Reading from the N-terminus, the 334-residue chain is Biotin synthase (334 aa).

The 228-residue stretch at 48 to 275 folds into the Radical SAM core domain; the sequence is NQVQTSQLLS…RSMVRLSAGR (228 aa). 3 residues coordinate [4Fe-4S] cluster: C63, C67, and C70. Residues C107, C138, C198, and R270 each contribute to the [2Fe-2S] cluster site.

Belongs to the radical SAM superfamily. Biotin synthase family. Homodimer. The cofactor is [4Fe-4S] cluster. [2Fe-2S] cluster serves as cofactor.

It carries out the reaction (4R,5S)-dethiobiotin + (sulfur carrier)-SH + 2 reduced [2Fe-2S]-[ferredoxin] + 2 S-adenosyl-L-methionine = (sulfur carrier)-H + biotin + 2 5'-deoxyadenosine + 2 L-methionine + 2 oxidized [2Fe-2S]-[ferredoxin]. It functions in the pathway cofactor biosynthesis; biotin biosynthesis; biotin from 7,8-diaminononanoate: step 2/2. In terms of biological role, catalyzes the conversion of dethiobiotin (DTB) to biotin by the insertion of a sulfur atom into dethiobiotin via a radical-based mechanism. This is Biotin synthase from Maricaulis maris (strain MCS10) (Caulobacter maris).